We begin with the raw amino-acid sequence, 303 residues long: Glycine betaine/carnitine/choline-binding protein OpuCC (303 aa).

A signal peptide spans 1–20 (MTKIKWLGAFALVFVMLLGG). Residue C21 is the site of N-palmitoyl cysteine attachment. The S-diacylglycerol cysteine moiety is linked to residue C21.

Belongs to the OsmX family. In terms of assembly, the complex is composed of two ATP-binding proteins (OpuCA), two transmembrane proteins (OpuCB and OpuCD) and a solute-binding protein (OpuCC).

Its subcellular location is the cell membrane. Functionally, member of a high affinity multicomponent binding-protein-dependent transport system for glycine betaine, carnitine, and choline. The chain is Glycine betaine/carnitine/choline-binding protein OpuCC (opuCC) from Bacillus subtilis (strain 168).